Here is a 199-residue protein sequence, read N- to C-terminus: Charged multivesicular body protein 1b (199 aa).

Coiled coils occupy residues 15–42 (AKEL…AIQK) and 178–199 (TSVA…RDQV). The segment at 167-199 (ELPQGQTGSVGTSVASTEQDELSQRLARLRDQV) is disordered. A compositionally biased stretch (polar residues) spans 170–183 (QGQTGSVGTSVAST). The MIT-interacting motif motif lies at 186 to 196 (DELSQRLARLR).

It belongs to the SNF7 family.

It localises to the cytoplasm. It is found in the cytosol. Its subcellular location is the endosome. The protein resides in the late endosome membrane. Its function is as follows. Probable peripherally associated component of the endosomal sorting required for transport complex III (ESCRT-III) which is involved in multivesicular bodies (MVBs) formation and sorting of endosomal cargo proteins into MVBs. MVBs contain intraluminal vesicles (ILVs) that are generated by invagination and scission from the limiting membrane of the endosome and mostly are delivered to lysosomes enabling degradation of membrane proteins, such as stimulated growth factor receptors, lysosomal enzymes and lipids. The polypeptide is Charged multivesicular body protein 1b (chmp1b) (Xenopus tropicalis (Western clawed frog)).